Consider the following 153-residue polypeptide: UPF0260 protein YcgN (153 aa).

This sequence belongs to the UPF0260 family.

In Salmonella agona (strain SL483), this protein is UPF0260 protein YcgN.